A 1085-amino-acid chain; its full sequence is Solute carrier family 12 member 4 (1085 aa).

Topologically, residues 1–119 are cytoplasmic; the sequence is MPHFTVVPVD…RRAAKAPSMG (119 aa). Residue serine 24 is modified to Phosphoserine. Over residues 28-46 the composition is skewed to basic and acidic residues; sequence YGERAEREDPDGHGNHRES. The disordered stretch occupies residues 28 to 47; the sequence is YGERAEREDPDGHGNHRESS. Phosphoserine is present on residues serine 47, serine 59, serine 81, and serine 88. A discontinuously helical membrane pass occupies residues 120-141; sequence TLMGVYLPCLQNIFGVILFLRL. Residues asparagine 131 and isoleucine 132 each contribute to the K(+) site. At 142–149 the chain is on the extracellular side; that stretch reads TWMVGTAG. The chain crosses the membrane as a helical span at residues 150-172; the sequence is VLQALLIVLICCCCTLLTAISMS. Topologically, residues 173–196 are cytoplasmic; sequence AIATNGVVPAGGSYFMISRSLGPE. A helical membrane pass occupies residues 197–225; it reads FGGAVGLCFYLGTTFAAAMYILGAIEILL. Residue tyrosine 216 coordinates K(+). Topologically, residues 226-248 are extracellular; it reads TYIAPPAAIFYPSGTHDTSNATL. A glycan (N-linked (GlcNAc...) asparagine) is linked at asparagine 245. Helical transmembrane passes span 249 to 271 and 272 to 297; these read NNMRVYGTVFLSFMTLVVFVGVK and YVNKFASLFLACVIISILSIYAGGIK. The Extracellular portion of the chain corresponds to 298–419; it reads SMFDPPVFPV…LYVVADIATS (122 aa). A disulfide bridge links cysteine 308 with cysteine 323. 3 N-linked (GlcNAc...) asparagine glycosylation sites follow: asparagine 312, asparagine 331, and asparagine 347. Cysteine 343 and cysteine 353 are joined by a disulfide. The chain crosses the membrane as a helical span at residues 420–440; the sequence is FTVLVGIFFPSVTGIMAGSNR. The K(+) site is built by proline 429 and threonine 432. 3 residues coordinate chloride: glycine 433, isoleucine 434, and methionine 435. Topologically, residues 441 to 450 are cytoplasmic; sequence SGDLRDAQKS. The helical transmembrane segment at 451–473 threads the bilayer; sequence IPVGTILAIVTTSLVYFSSVVLF. Residues 474–504 are Extracellular-facing; it reads GACIEGVVLRDKYGDGVSRNLVVGTLAWPSP. Residues 505 to 531 traverse the membrane as a helical segment; sequence WVIVVGSFFSTCGAGLQSLTGAPRLLQ. The Cytoplasmic segment spans residues 532–554; the sequence is AIAKDNIIPFLRVFGHGKANGEP. 2 helical membrane passes run 555-575 and 576-598; these read TWALLLTALIAELGILIASLD and MVAPILSMFFLMCYLFVNLACAV. Tyrosine 589 contacts chloride. Residues 599-612 are Cytoplasmic-facing; it reads QTLLRTPNWRPRFK. A run of 2 helical transmembrane segments spans residues 613 to 635 and 636 to 651; these read YYHWALSFLGMSLCLALMFVSSW and YYALVAMLIAGMIYKY. Residues 652–1085 are Cytoplasmic-facing; it reads IEYQGAEKEW…GGREVITIYS (434 aa). The scissor helix stretch occupies residues 665 to 681; sequence IRGLSLSAARYALLRLE. Residues leucine 697, lysine 699, lysine 707, tyrosine 708, and valine 730 each contribute to the ATP site. Serine 734 bears the Phosphoserine mark. 3 residues coordinate ATP: glycine 794, tryptophan 795, and tyrosine 797. Phosphoserine is present on residues serine 916 and serine 967. Position 983 is a phosphothreonine (threonine 983). Phosphoserine is present on serine 1050.

The protein belongs to the SLC12A transporter family. K/Cl co-transporter subfamily. As to quaternary structure, homodimer; adopts a domain-swap conformation at the scissor helices connecting the transmembrane domain and C-terminal domain. Heterodimer with other K-Cl cotransporters. Post-translationally, N-glycosylated. Phosphorylated, phosphorylation may regulate transporter activity.

It is found in the cell membrane. The enzyme catalyses K(+)(in) + chloride(in) = K(+)(out) + chloride(out). With respect to regulation, inhibited by WNK3. Functionally, mediates electroneutral potassium-chloride cotransport when activated by cell swelling. May contribute to cell volume homeostasis in single cells. May be involved in the regulation of basolateral Cl(-) exit in NaCl absorbing epithelia. In Oryctolagus cuniculus (Rabbit), this protein is Solute carrier family 12 member 4 (SLC12A4).